The primary structure comprises 269 residues: Octanoyltransferase LipM (269 aa).

Residues 31–239 enclose the BPL/LPL catalytic domain; the sequence is NHGAPVLRFY…GFSEGFEVNF (209 aa). The Acyl-thioester intermediate role is filled by Cys141.

It belongs to the octanoyltransferase LipM family. In terms of assembly, monomer.

It catalyses the reaction octanoyl-[ACP] + L-lysyl-[protein] = N(6)-octanoyl-L-lysyl-[protein] + holo-[ACP] + H(+). Its pathway is protein modification; protein lipoylation via endogenous pathway; protein N(6)-(lipoyl)lysine from octanoyl-[acyl-carrier-protein]. Catalyzes the transfer of endogenously produced octanoic acid from octanoyl-acyl-carrier-protein onto the lipoyl domain of GcvH, an intermediate carrier during protein lipoylation. The chain is Octanoyltransferase LipM from Carboxydothermus hydrogenoformans (strain ATCC BAA-161 / DSM 6008 / Z-2901).